The chain runs to 583 residues: Proline--tRNA ligase (583 aa).

Belongs to the class-II aminoacyl-tRNA synthetase family. ProS type 1 subfamily. Homodimer.

It is found in the cytoplasm. The enzyme catalyses tRNA(Pro) + L-proline + ATP = L-prolyl-tRNA(Pro) + AMP + diphosphate. Functionally, catalyzes the attachment of proline to tRNA(Pro) in a two-step reaction: proline is first activated by ATP to form Pro-AMP and then transferred to the acceptor end of tRNA(Pro). As ProRS can inadvertently accommodate and process non-cognate amino acids such as alanine and cysteine, to avoid such errors it has two additional distinct editing activities against alanine. One activity is designated as 'pretransfer' editing and involves the tRNA(Pro)-independent hydrolysis of activated Ala-AMP. The other activity is designated 'posttransfer' editing and involves deacylation of mischarged Ala-tRNA(Pro). The misacylated Cys-tRNA(Pro) is not edited by ProRS. The polypeptide is Proline--tRNA ligase (Aromatoleum aromaticum (strain DSM 19018 / LMG 30748 / EbN1) (Azoarcus sp. (strain EbN1))).